A 1235-amino-acid chain; its full sequence is Ubiquitin carboxyl-terminal hydrolase 40 (1235 aa).

The USP domain occupies 41–482; sequence SGIRNQGGTC…SAYMLFYRKS (442 aa). C50 (nucleophile) is an active-site residue. H305 functions as the Proton acceptor in the catalytic mechanism. Basic and acidic residues predominate over residues 1180–1190; sequence IRDDTGKEKQK. Residues 1180 to 1235 form a disordered region; that stretch reads IRDDTGKEKQKQRALGRRKSQEALHEQSSYILSSAETPARPRAPETSLSIHVGSFR. Positions 1205–1215 are enriched in polar residues; that stretch reads EQSSYILSSAE.

Belongs to the peptidase C19 family. Broadly expressed.

It carries out the reaction Thiol-dependent hydrolysis of ester, thioester, amide, peptide and isopeptide bonds formed by the C-terminal Gly of ubiquitin (a 76-residue protein attached to proteins as an intracellular targeting signal).. May be catalytically inactive. The protein is Ubiquitin carboxyl-terminal hydrolase 40 (USP40) of Homo sapiens (Human).